Consider the following 36-residue polypeptide: Kappa-theraphotoxin-Pg1b (36 aa).

Intrachain disulfides connect C4–C19, C11–C24, and C18–C31.

This sequence belongs to the neurotoxin 10 (Hwtx-1) family. 44 (Jztx-4) subfamily. In terms of tissue distribution, expressed by the venom gland.

The protein resides in the secreted. Functionally, gating modifier of Kv2.1/KCNB1, Kv2.2/KCNB2 and Kv4.3/KCND3 channels. In Chilobrachys guangxiensis (Chinese earth tiger tarantula), this protein is Kappa-theraphotoxin-Pg1b.